The primary structure comprises 37 residues: Large ribosomal subunit protein bL36 (37 aa).

Belongs to the bacterial ribosomal protein bL36 family.

In Francisella tularensis subsp. mediasiatica (strain FSC147), this protein is Large ribosomal subunit protein bL36.